The primary structure comprises 143 residues: Large ribosomal subunit protein uL13 (143 aa).

The protein belongs to the universal ribosomal protein uL13 family. In terms of assembly, part of the 50S ribosomal subunit.

This protein is one of the early assembly proteins of the 50S ribosomal subunit, although it is not seen to bind rRNA by itself. It is important during the early stages of 50S assembly. The chain is Large ribosomal subunit protein uL13 from Rubrobacter xylanophilus (strain DSM 9941 / JCM 11954 / NBRC 16129 / PRD-1).